Consider the following 252-residue polypeptide: Triosephosphate isomerase (252 aa).

9–11 (NWK) contacts substrate. His-95 serves as the catalytic Electrophile. Glu-167 acts as the Proton acceptor in catalysis. Residues Gly-173, Ser-213, and 234–235 (GG) contribute to the substrate site. At Ser-213 the chain carries Phosphoserine.

It belongs to the triosephosphate isomerase family. In terms of assembly, homodimer.

It localises to the cytoplasm. It catalyses the reaction D-glyceraldehyde 3-phosphate = dihydroxyacetone phosphate. The protein operates within carbohydrate biosynthesis; gluconeogenesis. Its pathway is carbohydrate degradation; glycolysis; D-glyceraldehyde 3-phosphate from glycerone phosphate: step 1/1. Functionally, involved in the gluconeogenesis. Catalyzes stereospecifically the conversion of dihydroxyacetone phosphate (DHAP) to D-glyceraldehyde-3-phosphate (G3P). The sequence is that of Triosephosphate isomerase from Oceanobacillus iheyensis (strain DSM 14371 / CIP 107618 / JCM 11309 / KCTC 3954 / HTE831).